A 496-amino-acid chain; its full sequence is Cytochrome c-552 (496 aa).

A signal peptide spans 1–23 (MKKYKFLFAISIIAIGLMTVLLA). His-100 is a heme c binding site. Cys-128, Cys-131, and Lys-132 together coordinate heme. The heme c site is built by Cys-166, Cys-169, His-170, Cys-210, Cys-213, and His-214. 4 residues coordinate Ca(2+): Glu-216, Tyr-217, Lys-269, and Gln-271. Residue Tyr-217 coordinates substrate. A substrate-binding site is contributed by His-272. 9 residues coordinate heme c: His-283, Cys-290, Cys-293, His-294, His-308, Cys-321, Cys-324, His-325, and His-400.

The protein belongs to the cytochrome c-552 family. The cofactor is Ca(2+). Heme c serves as cofactor.

The protein resides in the periplasm. The enzyme catalyses 6 Fe(III)-[cytochrome c] + NH4(+) + 2 H2O = 6 Fe(II)-[cytochrome c] + nitrite + 8 H(+). The protein operates within nitrogen metabolism; nitrate reduction (assimilation). Catalyzes the reduction of nitrite to ammonia, consuming six electrons in the process. The sequence is that of Cytochrome c-552 from Aliarcobacter butzleri (strain RM4018) (Arcobacter butzleri).